Consider the following 362-residue polypeptide: Oxysterol-binding protein 5 (362 aa).

Belongs to the OSBP family.

This chain is Oxysterol-binding protein 5 (osbE), found in Dictyostelium discoideum (Social amoeba).